The sequence spans 284 residues: Bifunctional protein FolD (284 aa).

Residues 165 to 167, Ser-190, and Val-231 each bind NADP(+); that span reads GRS.

Belongs to the tetrahydrofolate dehydrogenase/cyclohydrolase family. As to quaternary structure, homodimer.

The enzyme catalyses (6R)-5,10-methylene-5,6,7,8-tetrahydrofolate + NADP(+) = (6R)-5,10-methenyltetrahydrofolate + NADPH. It catalyses the reaction (6R)-5,10-methenyltetrahydrofolate + H2O = (6R)-10-formyltetrahydrofolate + H(+). It functions in the pathway one-carbon metabolism; tetrahydrofolate interconversion. Its function is as follows. Catalyzes the oxidation of 5,10-methylenetetrahydrofolate to 5,10-methenyltetrahydrofolate and then the hydrolysis of 5,10-methenyltetrahydrofolate to 10-formyltetrahydrofolate. The polypeptide is Bifunctional protein FolD (Ruminiclostridium cellulolyticum (strain ATCC 35319 / DSM 5812 / JCM 6584 / H10) (Clostridium cellulolyticum)).